The following is a 459-amino-acid chain: Biphenyl dioxygenase subunit alpha (459 aa).

The Rieske domain maps to 58-156 (WLLLGHESHV…KEGDCGFDKA (99 aa)). C100, H102, C120, and H123 together coordinate [2Fe-2S] cluster. Fe cation is bound by residues H233 and H239.

This sequence belongs to the bacterial ring-hydroxylating dioxygenase alpha subunit family. In terms of assembly, heterohexamer consisting of three BphA subunits and three BphE subunits. A ferredoxin (BphF) and a ferredoxin reductase (BphG) must be present to obtain activity. It depends on [2Fe-2S] cluster as a cofactor. Requires Fe cation as cofactor.

The enzyme catalyses biphenyl + NADH + O2 + H(+) = (2R,3S)-3-phenylcyclohexa-3,5-diene-1,2-diol + NAD(+). It functions in the pathway xenobiotic degradation; biphenyl degradation; 2-hydroxy-2,4-pentadienoate and benzoate from biphenyl: step 1/4. The chain is Biphenyl dioxygenase subunit alpha (bphA) from Paraburkholderia xenovorans (strain LB400).